The following is a 161-amino-acid chain: Transcriptional regulator MraZ (161 aa).

SpoVT-AbrB domains lie at 7–55 and 84–127; these read RYTN…GPAF and SAEL…EPGA.

This sequence belongs to the MraZ family. Forms oligomers.

The protein resides in the cytoplasm. Its subcellular location is the nucleoid. The protein is Transcriptional regulator MraZ of Parvibaculum lavamentivorans (strain DS-1 / DSM 13023 / NCIMB 13966).